Here is a 697-residue protein sequence, read N- to C-terminus: DNA ligase (697 aa).

NAD(+)-binding positions include 41 to 45 (DPVYD), 90 to 91 (SL), and E129. Catalysis depends on K131, which acts as the N6-AMP-lysine intermediate. Positions 152, 189, 308, and 332 each coordinate NAD(+). Residues C426, C429, C444, and C449 each coordinate Zn(2+). A BRCT domain is found at 617–697 (AANHHLTGST…ALQNMLRGST (81 aa)).

It belongs to the NAD-dependent DNA ligase family. LigA subfamily. The cofactor is Mg(2+). Mn(2+) is required as a cofactor.

The catalysed reaction is NAD(+) + (deoxyribonucleotide)n-3'-hydroxyl + 5'-phospho-(deoxyribonucleotide)m = (deoxyribonucleotide)n+m + AMP + beta-nicotinamide D-nucleotide.. In terms of biological role, DNA ligase that catalyzes the formation of phosphodiester linkages between 5'-phosphoryl and 3'-hydroxyl groups in double-stranded DNA using NAD as a coenzyme and as the energy source for the reaction. It is essential for DNA replication and repair of damaged DNA. The protein is DNA ligase of Synechococcus sp. (strain CC9311).